A 341-amino-acid chain; its full sequence is Putative ubiquitin-like-specific protease 1B (341 aa).

Catalysis depends on residues His231, Asp248, and Cys300.

Belongs to the peptidase C48 family.

Functionally, protease that catalyzes two essential functions in the SUMO pathway: processing of full-length SUMOs to their mature forms and deconjugation of SUMO from targeted proteins. The polypeptide is Putative ubiquitin-like-specific protease 1B (ULP1B) (Arabidopsis thaliana (Mouse-ear cress)).